The following is a 289-amino-acid chain: Rhodopsin (289 aa).

Residues 1–7 (YLVNPAA) lie on the Extracellular side of the membrane. The chain crosses the membrane as a helical span at residues 8–32 (YAAPGAYMFLLILVGFPVNFLTLYV). The Cytoplasmic segment spans residues 33-44 (TLEHKKLRTPLN). A helical membrane pass occupies residues 45–67 (YILLNLAVADLFMVLGGFTTTMY). Residues 68–81 (TSMHGYFVLGRLGC) lie on the Extracellular side of the membrane. Cys81 and Cys158 are oxidised to a cystine. A helical membrane pass occupies residues 82–104 (NLEGFFATLGGEIALWSLVVLAI). The 'Ionic lock' involved in activated form stabilization signature appears at 105-107 (ERW). Residues 105-123 (ERWIVVCKPISNFRFTEDH) are Cytoplasmic-facing. Residues 124–144 (AIMGLAFSWVMALTCAVPPLV) traverse the membrane as a helical segment. The Extracellular segment spans residues 145–173 (GWSRYIPEGMQCSCGVDYYTRAEGFNNES). An N-linked (GlcNAc...) asparagine glycan is attached at Asn171. Residues 174 to 195 (FVIYMFIVHFLIPLSNNFFCYG) traverse the membrane as a helical segment. Over 196–223 (RLLCAVKEAAAAQQESETTQRAEREVSR) the chain is Cytoplasmic. Residues 224 to 245 (MVVMMVVSFLMCWLPYASVAWY) form a helical membrane-spanning segment. Residues 246–257 (IFCNQGSEFGPI) are Extracellular-facing. Residues 258 to 279 (FMTLPAFFAKSSAIYNPLIYIC) form a helical membrane-spanning segment. An N6-(retinylidene)lysine modification is found at Lys267. At 280–289 (MNKHVRHCMI) the chain is on the cytoplasmic side.

It belongs to the G-protein coupled receptor 1 family. Opsin subfamily. Phosphorylated on some or all of the serine and threonine residues present in the C-terminal region. In terms of processing, contains one covalently linked retinal chromophore.

The protein resides in the membrane. Its subcellular location is the cell projection. It localises to the cilium. It is found in the photoreceptor outer segment. Functionally, photoreceptor required for image-forming vision at low light intensity. While most salt water fish species use retinal as chromophore, most freshwater fish use 3-dehydroretinal, or a mixture of retinal and 3-dehydroretinal. Light-induced isomerization of 11-cis to all-trans retinal triggers a conformational change that activates signaling via G-proteins. Subsequent receptor phosphorylation mediates displacement of the bound G-protein alpha subunit by arrestin and terminates signaling. In Cottocomephorus grewingkii (Baikal yellowfin), this protein is Rhodopsin (rho).